A 352-amino-acid chain; its full sequence is Phenylalanine--tRNA ligase alpha subunit (352 aa).

Residue glutamate 258 participates in Mg(2+) binding.

Belongs to the class-II aminoacyl-tRNA synthetase family. Phe-tRNA synthetase alpha subunit type 1 subfamily. In terms of assembly, tetramer of two alpha and two beta subunits. Mg(2+) serves as cofactor.

The protein localises to the cytoplasm. It carries out the reaction tRNA(Phe) + L-phenylalanine + ATP = L-phenylalanyl-tRNA(Phe) + AMP + diphosphate + H(+). The protein is Phenylalanine--tRNA ligase alpha subunit of Staphylococcus saprophyticus subsp. saprophyticus (strain ATCC 15305 / DSM 20229 / NCIMB 8711 / NCTC 7292 / S-41).